A 389-amino-acid chain; its full sequence is MNPSVSSRPPWSTAFYLGPGFPIQWYGIIVAIGIAFGILMFVLKLIYFYKIQDNSFYFFIFIAVLTMVLGARAWYFLIEAVDGRSSGSNFFDFRNGGLAIQGGVLLTTLAGIIYFNVFLNMKTTKTKTTAKLLNNKNQIKTVYVERNISVFVMLDLIAPCVLIGQAIGRWGNFFNAEVYGAALVGSKNDTLSAANTTWGFLRILMPKVWDGMFINGSFRIPLFLIESFFNTIFFVFIYFVMDHIKGIRSGTIGFSYFLATGIVRLILETQRDEAFKYNTSIVFSALLILVGIVGIIYCQTLAIKLRGYFWTYFFLYGWYKVAAFFTTLFMKDRTQACSSKFAFYEKSLPEKERSFFQLKYYNDVLPPKIYRLYDHEMLMFDKLEAVPEA.

A run of 4 helical transmembrane segments spans residues 28–48 (IIVA…LIYF), 58–78 (FFIF…YFLI), 98–118 (LAIQ…FNVF), and 148–168 (ISVF…QAIG). An a 1,2-diacyl-sn-glycero-3-phospho-(1'-sn-glycerol)-binding site is contributed by Arg169. 3 helical membrane-spanning segments follow: residues 220–240 (IPLF…IYFV), 281–301 (IVFS…CQTL), and 309–329 (FWTY…TTLF).

This sequence belongs to the Lgt family.

Its subcellular location is the cell membrane. It catalyses the reaction L-cysteinyl-[prolipoprotein] + a 1,2-diacyl-sn-glycero-3-phospho-(1'-sn-glycerol) = an S-1,2-diacyl-sn-glyceryl-L-cysteinyl-[prolipoprotein] + sn-glycerol 1-phosphate + H(+). It participates in protein modification; lipoprotein biosynthesis (diacylglyceryl transfer). Functionally, catalyzes the transfer of the diacylglyceryl group from phosphatidylglycerol to the sulfhydryl group of the N-terminal cysteine of a prolipoprotein, the first step in the formation of mature lipoproteins. In Mycoplasma pneumoniae (strain ATCC 29342 / M129 / Subtype 1) (Mycoplasmoides pneumoniae), this protein is Phosphatidylglycerol--prolipoprotein diacylglyceryl transferase.